Consider the following 84-residue polypeptide: Putative lipoprotein RzoQ (84 aa).

An N-terminal signal peptide occupies residues 1–22; sequence MRNRNLLKFLPGLLICLIVLTS. Cys23 carries N-palmitoyl cysteine lipidation. A lipid anchor (S-diacylglycerol cysteine) is attached at Cys23.

It is found in the cell membrane. The protein is Putative lipoprotein RzoQ (rzoQ) of Escherichia coli (strain K12).